The following is a 219-amino-acid chain: MRMRKKPWARPELESCNFFIVNPKENKGKWNESFNNENPIYLELGCGKGVFVAVHGSDNENINYIAIDIKDEVLGLAKRNIEKAYNEKNKELNNIKLMAQEIGLINEILDENDKISRIYINFCNPWPKKKHKKRRLTHTRQLIQYRNFLKENGEIWFKTDDDELFEESLEYFKEGKFRIEYITYDLHTSGFEGNIQTEHERMFTEQGIKTKFLIAIKED.

Positions 43, 68, 101, and 124 each coordinate S-adenosyl-L-methionine. Substrate contacts are provided by Lys128 and Asp160.

The protein belongs to the class I-like SAM-binding methyltransferase superfamily. TrmB family.

It catalyses the reaction guanosine(46) in tRNA + S-adenosyl-L-methionine = N(7)-methylguanosine(46) in tRNA + S-adenosyl-L-homocysteine. It functions in the pathway tRNA modification; N(7)-methylguanine-tRNA biosynthesis. Its function is as follows. Catalyzes the formation of N(7)-methylguanine at position 46 (m7G46) in tRNA. This is tRNA (guanine-N(7)-)-methyltransferase from Clostridium botulinum (strain Eklund 17B / Type B).